Here is a 120-residue protein sequence, read N- to C-terminus: Large ribosomal subunit protein uL18c (120 aa).

The protein belongs to the universal ribosomal protein uL18 family. Part of the 50S ribosomal subunit; contacts the 5S rRNA.

The protein resides in the plastid. Its subcellular location is the chloroplast. In terms of biological role, binds 5S rRNA, forms part of the central protuberance of the 50S subunit. This is Large ribosomal subunit protein uL18c (rpl18) from Porphyra purpurea (Red seaweed).